A 517-amino-acid polypeptide reads, in one-letter code: Ribonuclease Y (517 aa).

A helical transmembrane segment spans residues 1 to 21 (MIEVLIGLGAGVAGVGAGYLY). Residues 207–273 (LINVVNIKND…TRVIELLVED (67 aa)) form the KH domain. Positions 333-426 (ALAHSLEVAH…VCAADCLSAA (94 aa)) constitute an HD domain.

This sequence belongs to the RNase Y family.

It is found in the cell membrane. Functionally, endoribonuclease that initiates mRNA decay. In Campylobacter curvus (strain 525.92), this protein is Ribonuclease Y.